Here is a 104-residue protein sequence, read N- to C-terminus: Gastrin (104 aa).

The signal sequence occupies residues 1–21; the sequence is MQRLCVYVLILALALATFSEA. A propeptide spanning residues 22-58 is cleaved from the precursor; it reads SWKPRSRLQDAPSGPGANRGLEPHGLDQLGPASHHRR. The disordered stretch occupies residues 22 to 70; the sequence is SWKPRSRLQDAPSGPGANRGLEPHGLDQLGPASHHRRQLGLQGPPQLVA. Pyrrolidone carboxylic acid is present on residues glutamine 59 and glutamine 76. Tyrosine 87 carries the post-translational modification Sulfotyrosine. Phenylalanine 92 is subject to Phenylalanine amide. Serine 96 is subject to Phosphoserine. Residues 96-104 constitute a propeptide that is removed on maturation; sequence SAEEGDQRP.

Belongs to the gastrin/cholecystokinin family.

It localises to the secreted. Functionally, gastrin stimulates the stomach mucosa to produce and secrete hydrochloric acid and the pancreas to secrete its digestive enzymes. It also stimulates smooth muscle contraction and increases blood circulation and water secretion in the stomach and intestine. This is Gastrin (GAST) from Canis lupus familiaris (Dog).